We begin with the raw amino-acid sequence, 374 residues long: Chaperone protein DnaJ (374 aa).

The J domain maps to 5–70 (DYYKLLGVDR…EKRAGYDRYG (66 aa)). The segment at 136–214 (GIQAPIHYVT…CNGSGRRRDE (79 aa)) adopts a CR-type zinc-finger fold. Zn(2+) contacts are provided by Cys149, Cys152, Cys166, Cys169, Cys188, Cys191, Cys202, and Cys205. CXXCXGXG motif repeat units follow at residues 149-156 (CDMCQGRG), 166-173 (CHTCQGSG), 188-195 (CTTCYGEG), and 202-209 (CKKCNGSG).

The protein belongs to the DnaJ family. As to quaternary structure, homodimer. Zn(2+) is required as a cofactor.

It is found in the cytoplasm. Its function is as follows. Participates actively in the response to hyperosmotic and heat shock by preventing the aggregation of stress-denatured proteins and by disaggregating proteins, also in an autonomous, DnaK-independent fashion. Unfolded proteins bind initially to DnaJ; upon interaction with the DnaJ-bound protein, DnaK hydrolyzes its bound ATP, resulting in the formation of a stable complex. GrpE releases ADP from DnaK; ATP binding to DnaK triggers the release of the substrate protein, thus completing the reaction cycle. Several rounds of ATP-dependent interactions between DnaJ, DnaK and GrpE are required for fully efficient folding. Also involved, together with DnaK and GrpE, in the DNA replication of plasmids through activation of initiation proteins. The sequence is that of Chaperone protein DnaJ from Wolbachia sp. subsp. Brugia malayi (strain TRS).